The primary structure comprises 342 residues: Aristolochene synthase (342 aa).

Residues D115, N244, S248, and E252 each contribute to the Mg(2+) site. Positions 340 and 341 each coordinate (2E,6E)-farnesyl diphosphate.

It belongs to the terpene synthase family. Homodimer. Mg(2+) is required as a cofactor.

It carries out the reaction (2E,6E)-farnesyl diphosphate = (+)-aristolochene + diphosphate. It functions in the pathway sesquiterpene biosynthesis; aristolochene biosynthesis; aristolochene from farnesyl diphosphate: step 1/1. Aristolochene synthase; part of the gene cluster that mediates the biosynthesis of PR-toxin, a bicyclic sesquiterpene belonging to the eremophilane class and acting as a mycotoxin. The first step of the pathway is catalyzed by the aristolochene synthase which performs the cyclization of trans,trans-farnesyl diphosphate (FPP) to the bicyclic sesquiterpene aristolochene. Following the formation of aristolochene, the non-oxygenated aristolochene is converted to the trioxygenated intermediate eremofortin B, via 7-epi-neopetasone. This conversion appears to involve three enzymes, a hydroxysterol oxidase-like enzyme, the quinone-oxidase prx3 that forms the quinone-type-structure in the bicyclic nucleus of aristolochene with the C8-oxo group and the C-3 hydroxyl group, and the P450 monooxygenase ORF6 that introduces the epoxide at the double bond between carbons 1 and 2. No monoxy or dioxy-intermediates have been reported to be released to the broth, so these three early oxidative reactions may be coupled together. Eremofortin B is further oxidized by another P450 monooxygenase, that introduces a second epoxide between carbons 7 and 11 prior to acetylation to eremofortin A by the acetyltransferase ORF8. The second epoxidation may be performed by a second P450 monooxygenase. After the acetylation step, eremofortin A is converted to eremofortin C and then to PR-toxin. First the conversion of eremofortin A to eremofortin C proceeds by oxidation of the side chain of the molecule at C-12 and is catalyzed by the short-chain oxidoreductase prx1. The cytochrome P450 monooxygenase ORF5 also plays a role in this step. The primary alcohol formed at C-12 is finally oxidized by the short-chain alcohol dehydrogenase prx4 that forms PR-toxin. The sequence is that of Aristolochene synthase from Penicillium roqueforti (strain FM164).